The sequence spans 308 residues: Acetyl-coenzyme A carboxylase carboxyl transferase subunit alpha (308 aa).

The CoA carboxyltransferase C-terminal domain occupies 36–286 (ELEKEVSSVY…ESYFLKAFEE (251 aa)).

It belongs to the AccA family. As to quaternary structure, acetyl-CoA carboxylase is a heterohexamer composed of biotin carboxyl carrier protein (AccB), biotin carboxylase (AccC) and two subunits each of ACCase subunit alpha (AccA) and ACCase subunit beta (AccD).

It is found in the cytoplasm. The catalysed reaction is N(6)-carboxybiotinyl-L-lysyl-[protein] + acetyl-CoA = N(6)-biotinyl-L-lysyl-[protein] + malonyl-CoA. Its pathway is lipid metabolism; malonyl-CoA biosynthesis; malonyl-CoA from acetyl-CoA: step 1/1. In terms of biological role, component of the acetyl coenzyme A carboxylase (ACC) complex. First, biotin carboxylase catalyzes the carboxylation of biotin on its carrier protein (BCCP) and then the CO(2) group is transferred by the carboxyltransferase to acetyl-CoA to form malonyl-CoA. The protein is Acetyl-coenzyme A carboxylase carboxyl transferase subunit alpha of Helicobacter hepaticus (strain ATCC 51449 / 3B1).